Consider the following 226-residue polypeptide: Adenosine 5'-phosphosulfate reductase (226 aa).

Residues Cys-112, Cys-113, Cys-195, and Cys-198 each contribute to the [4Fe-4S] cluster site. The active-site Nucleophile; cysteine thiosulfonate intermediate is the Cys-221.

Belongs to the PAPS reductase family. CysH subfamily. [4Fe-4S] cluster serves as cofactor.

It is found in the cytoplasm. It catalyses the reaction [thioredoxin]-disulfide + sulfite + AMP + 2 H(+) = adenosine 5'-phosphosulfate + [thioredoxin]-dithiol. It participates in sulfur metabolism; hydrogen sulfide biosynthesis; sulfite from sulfate. Functionally, catalyzes the formation of sulfite from adenosine 5'-phosphosulfate (APS) using thioredoxin as an electron donor. The chain is Adenosine 5'-phosphosulfate reductase from Bacillus anthracis (strain A0248).